The sequence spans 145 residues: D-aminoacyl-tRNA deacylase (145 aa).

Residues 137–138 (GP) carry the Gly-cisPro motif, important for rejection of L-amino acids motif.

It belongs to the DTD family. As to quaternary structure, homodimer.

It localises to the cytoplasm. The catalysed reaction is glycyl-tRNA(Ala) + H2O = tRNA(Ala) + glycine + H(+). The enzyme catalyses a D-aminoacyl-tRNA + H2O = a tRNA + a D-alpha-amino acid + H(+). In terms of biological role, an aminoacyl-tRNA editing enzyme that deacylates mischarged D-aminoacyl-tRNAs. Also deacylates mischarged glycyl-tRNA(Ala), protecting cells against glycine mischarging by AlaRS. Acts via tRNA-based rather than protein-based catalysis; rejects L-amino acids rather than detecting D-amino acids in the active site. By recycling D-aminoacyl-tRNA to D-amino acids and free tRNA molecules, this enzyme counteracts the toxicity associated with the formation of D-aminoacyl-tRNA entities in vivo and helps enforce protein L-homochirality. The sequence is that of D-aminoacyl-tRNA deacylase from Pseudomonas entomophila (strain L48).